A 504-amino-acid polypeptide reads, in one-letter code: Hexokinase-10 (504 aa).

The helical transmembrane segment at 7–29 (GWVRVAAVGWAVAACAVAAGMVA) threads the bilayer. A Hexokinase domain is found at 39 to 493 (NRAVAVVRDL…SGTGAALLAA (455 aa)). The hexokinase small subdomain stretch occupies residues 94–226 (DGSEEGISYA…GLNMKVNVLV (133 aa)). The ADP site is built by Gly108 and Thr109. The D-glucose site is built by Thr192, Lys193, Asn227, Asn254, Glu282, and Glu313. A hexokinase large subdomain region spans residues 227 to 482 (NNTVGTLALG…ATVSLRVMEE (256 aa)). Gly447 lines the ADP pocket.

This sequence belongs to the hexokinase family. In terms of tissue distribution, expressed specifically in stamen.

The protein localises to the plastid. The protein resides in the chloroplast outer membrane. The enzyme catalyses a D-hexose + ATP = a D-hexose 6-phosphate + ADP + H(+). It catalyses the reaction D-fructose + ATP = D-fructose 6-phosphate + ADP + H(+). It carries out the reaction D-glucose + ATP = D-glucose 6-phosphate + ADP + H(+). Its pathway is carbohydrate metabolism; hexose metabolism. It functions in the pathway carbohydrate degradation; glycolysis; D-glyceraldehyde 3-phosphate and glycerone phosphate from D-glucose: step 1/4. Functionally, fructose and glucose phosphorylating enzyme. The chain is Hexokinase-10 (HXK10) from Oryza sativa subsp. japonica (Rice).